We begin with the raw amino-acid sequence, 103 residues long: Large ribosomal subunit protein uL24 (103 aa).

This sequence belongs to the universal ribosomal protein uL24 family. As to quaternary structure, part of the 50S ribosomal subunit.

One of two assembly initiator proteins, it binds directly to the 5'-end of the 23S rRNA, where it nucleates assembly of the 50S subunit. Functionally, one of the proteins that surrounds the polypeptide exit tunnel on the outside of the subunit. The protein is Large ribosomal subunit protein uL24 of Lacticaseibacillus casei (strain BL23) (Lactobacillus casei).